The following is a 428-amino-acid chain: Histidinol dehydrogenase (428 aa).

3 residues coordinate NAD(+): Tyr-129, Gln-188, and Asn-211. Substrate is bound by residues Ser-234, Gln-256, and His-259. Zn(2+) contacts are provided by Gln-256 and His-259. Catalysis depends on proton acceptor residues Glu-323 and His-324. Substrate-binding residues include His-324, Asp-357, Glu-411, and His-416. Asp-357 is a binding site for Zn(2+). A Zn(2+)-binding site is contributed by His-416.

The protein belongs to the histidinol dehydrogenase family. Zn(2+) serves as cofactor.

It catalyses the reaction L-histidinol + 2 NAD(+) + H2O = L-histidine + 2 NADH + 3 H(+). The protein operates within amino-acid biosynthesis; L-histidine biosynthesis; L-histidine from 5-phospho-alpha-D-ribose 1-diphosphate: step 9/9. In terms of biological role, catalyzes the sequential NAD-dependent oxidations of L-histidinol to L-histidinaldehyde and then to L-histidine. The sequence is that of Histidinol dehydrogenase from Caulobacter vibrioides (strain ATCC 19089 / CIP 103742 / CB 15) (Caulobacter crescentus).